Consider the following 101-residue polypeptide: Small ribosomal subunit protein uS14 (101 aa).

A compositionally biased stretch (basic and acidic residues) spans 1-10 (MAKKSSIEKN). The disordered stretch occupies residues 1-23 (MAKKSSIEKNNRRKRMVKNAAPK).

Belongs to the universal ribosomal protein uS14 family. As to quaternary structure, part of the 30S ribosomal subunit. Contacts proteins S3 and S10.

Binds 16S rRNA, required for the assembly of 30S particles and may also be responsible for determining the conformation of the 16S rRNA at the A site. The polypeptide is Small ribosomal subunit protein uS14 (Bradyrhizobium diazoefficiens (strain JCM 10833 / BCRC 13528 / IAM 13628 / NBRC 14792 / USDA 110)).